We begin with the raw amino-acid sequence, 240 residues long: uncharacterized protein (240 aa).

The protein resides in the mitochondrion. This is an uncharacterized protein from Arabidopsis thaliana (Mouse-ear cress).